The primary structure comprises 220 residues: Adenylate kinase (220 aa).

13-18 (GAGKGT) serves as a coordination point for ATP. Residues 33 to 62 (STGDILRAAVKEGTPLGLEAQSYMNRGALV) are NMP. Residues threonine 34, arginine 39, 60 to 62 (ALV), 88 to 91 (GFPR), and glutamine 95 each bind AMP. Positions 129-170 (GRRTCPLCKRIFHVRFNPPPAAPPFCTDHTDCPSELVQRPDD) are LID. Position 130 (arginine 130) interacts with ATP. The Zn(2+) site is built by cysteine 133 and cysteine 136. 139-140 (IF) is a binding site for ATP. Residues aspartate 156 and cysteine 160 each contribute to the Zn(2+) site. Arginine 167 and arginine 178 together coordinate AMP. ATP is bound at residue arginine 206.

The protein belongs to the adenylate kinase family. Monomer.

The protein resides in the cytoplasm. It catalyses the reaction AMP + ATP = 2 ADP. It participates in purine metabolism; AMP biosynthesis via salvage pathway; AMP from ADP: step 1/1. Functionally, catalyzes the reversible transfer of the terminal phosphate group between ATP and AMP. Plays an important role in cellular energy homeostasis and in adenine nucleotide metabolism. In Gloeobacter violaceus (strain ATCC 29082 / PCC 7421), this protein is Adenylate kinase.